Here is a 339-residue protein sequence, read N- to C-terminus: Phosphoribosylformylglycinamidine cyclo-ligase (339 aa).

The protein belongs to the AIR synthase family.

Its subcellular location is the cytoplasm. The catalysed reaction is 2-formamido-N(1)-(5-O-phospho-beta-D-ribosyl)acetamidine + ATP = 5-amino-1-(5-phospho-beta-D-ribosyl)imidazole + ADP + phosphate + H(+). It participates in purine metabolism; IMP biosynthesis via de novo pathway; 5-amino-1-(5-phospho-D-ribosyl)imidazole from N(2)-formyl-N(1)-(5-phospho-D-ribosyl)glycinamide: step 2/2. The polypeptide is Phosphoribosylformylglycinamidine cyclo-ligase (Fusobacterium nucleatum subsp. nucleatum (strain ATCC 25586 / DSM 15643 / BCRC 10681 / CIP 101130 / JCM 8532 / KCTC 2640 / LMG 13131 / VPI 4355)).